The chain runs to 594 residues: APOBEC1 complementation factor (594 aa).

3 consecutive RRM domains span residues 56–134, 136–218, and 231–303; these read CEIF…ASVD, CRLF…WAEP, and KILY…LAKP. Residues 360-409 are required for nuclear localization; sequence HFPATKGHLSNRAIIRAPSVREIYMNVPVGAAGVRGLGGRGYLAYTGLGR. The residue at position 499 (Thr499) is a Phosphothreonine.

Part of the apolipoprotein B mRNA editing complex with APOBEC1. Interacts with TNPO2; TNPO2 may be responsible for transport of A1CF into the nucleus. Interacts with SYNCRIP. Interacts with CELF2/CUGBP2. Interacts with RBM47. Widely expressed with highest levels in brain, liver, pancreas, colon and spleen.

It localises to the nucleus. The protein localises to the endoplasmic reticulum. It is found in the cytoplasm. Essential component of the apolipoprotein B mRNA editing enzyme complex which is responsible for the postranscriptional editing of a CAA codon for Gln to a UAA codon for stop in APOB mRNA. Binds to APOB mRNA and is probably responsible for docking the catalytic subunit, APOBEC1, to the mRNA to allow it to deaminate its target cytosine. The complex also protects the edited APOB mRNA from nonsense-mediated decay. This Homo sapiens (Human) protein is APOBEC1 complementation factor (A1CF).